We begin with the raw amino-acid sequence, 46 residues long: Iota-conotoxin-like R11.17 (46 aa).

2 positions are modified to 4-hydroxyproline: Pro2 and Pro11. 4 cysteine pairs are disulfide-bonded: Cys5–Cys19, Cys12–Cys22, Cys18–Cys27, and Cys21–Cys38. Pro29 is modified (4-hydroxyproline). Phe44 bears the D-phenylalanine mark.

The protein belongs to the conotoxin I1 superfamily. Expressed by the venom duct.

The protein resides in the secreted. In terms of biological role, iota-conotoxins bind to voltage-gated sodium channels (Nav) and act as agonists by shifting the voltage-dependence of activation to more hyperpolarized levels. Produces general excitatory symptoms. The protein is Iota-conotoxin-like R11.17 of Conus radiatus (Rayed cone).